Consider the following 232-residue polypeptide: Vacuolar iron transporter homolog 1 (232 aa).

Over 1-59 the chain is Cytoplasmic; sequence MAIDLGCHVGCASPETKQEETADPTAAPVVVDDVEAAAGGRRPGDGGGVNYVARAQWLR. The chain crosses the membrane as a helical span at residues 60-80; it reads AAVLGANDGLVSVASLMVGVG. The Vacuolar portion of the chain corresponds to 81 to 89; it reads AANGTRRAM. A helical membrane pass occupies residues 90-110; sequence LVSGLAGLVAGACSMAIGEFV. At 111–148 the chain is on the cytoplasmic side; sequence SVYAQCDIQAAQIERARGGKDADGGEEEEELPSPTMAA. The chain crosses the membrane as a helical span at residues 149–169; that stretch reads VASALSFAAGAALPLLAGGFV. Residues 170–175 are Vacuolar-facing; that stretch reads RPWAAR. The helical transmembrane segment at 176 to 196 threads the bilayer; it reads VAAVCAASSLGLAGFGVASAY. Residues 197 to 208 are Cytoplasmic-facing; the sequence is LGGAGVARSGVR. Residues 209–229 form a helical membrane-spanning segment; the sequence is MLVGGWLAMAVTYGVLKLFGM. The Vacuolar portion of the chain corresponds to 230 to 232; it reads HGV.

The protein belongs to the CCC1 family.

It is found in the vacuole membrane. The enzyme catalyses Fe(2+)(in) = Fe(2+)(out). Functionally, probable vacuolar iron transporter that may be involved in the regulation of iron distribution throughout the plant. In Oryza sativa subsp. japonica (Rice), this protein is Vacuolar iron transporter homolog 1.